Here is a 715-residue protein sequence, read N- to C-terminus: Polyribonucleotide nucleotidyltransferase (715 aa).

D490 and D496 together coordinate Mg(2+). Residues 557-616 (PRIETMTIPTDKIREVIGSGGKVIREIVETSGAKVDISDDGTIKIASANADSIKKAYDMI) form the KH domain. One can recognise an S1 motif domain in the interval 626 to 694 (GKIYVGKVVK…DRGKVRLGMK (69 aa)).

This sequence belongs to the polyribonucleotide nucleotidyltransferase family. Mg(2+) is required as a cofactor.

It localises to the cytoplasm. The catalysed reaction is RNA(n+1) + phosphate = RNA(n) + a ribonucleoside 5'-diphosphate. Its function is as follows. Involved in mRNA degradation. Catalyzes the phosphorolysis of single-stranded polyribonucleotides processively in the 3'- to 5'-direction. The polypeptide is Polyribonucleotide nucleotidyltransferase (Paracoccus denitrificans (strain Pd 1222)).